We begin with the raw amino-acid sequence, 463 residues long: D(5)-like dopamine receptor (463 aa).

Residues 1 to 39 lie on the Extracellular side of the membrane; sequence MENFYNETEPTEPRGGVDPLRVVTAAEDVPAPVGGVSVR. Residue asparagine 6 is glycosylated (N-linked (GlcNAc...) asparagine). Residues 40 to 65 form a helical membrane-spanning segment; sequence ALTGCVLCALIVSTLLGNTLVCAAVI. The Cytoplasmic portion of the chain corresponds to 66 to 76; that stretch reads KFRHLRSKVTN. Residues 77-103 traverse the membrane as a helical segment; sequence AFVVSLAVSDLFVAVLVMPWRAVSEVA. At 104-112 the chain is on the extracellular side; that stretch reads GVWLFGRFC. Cysteine 112 and cysteine 194 are joined by a disulfide. The helical transmembrane segment at 113–135 threads the bilayer; the sequence is DTWVAFDIMCSTASILNLCVISM. The Cytoplasmic segment spans residues 136–154; it reads DRYWAISNPFRYERRMTRR. A helical transmembrane segment spans residues 155-180; that stretch reads FAFLMIAVAWTLSVLISFIPVQLNWH. The Extracellular segment spans residues 181–198; it reads RADNNSSAHEQGDCNASL. Residues 199 to 223 form a helical membrane-spanning segment; sequence NRTYAISSSLISFYIPVLIMVGTYT. The Cytoplasmic portion of the chain corresponds to 224 to 273; that stretch reads RIFRIAQTQIRRISSLERAAGQRAQNQSHRASTHDESALKTSFKRETKVL. The chain crosses the membrane as a helical span at residues 274-301; sequence KTLSVIMGVFVFCWLPFFVLNCVVPFCD. The Extracellular segment spans residues 302 to 315; it reads VDKVGEPPCVSDTT. Residues 316–337 form a helical membrane-spanning segment; the sequence is FNIFVWFGWANSSLNPVIYAFN. Residues 338–463 lie on the Cytoplasmic side of the membrane; that stretch reads ADFRKAFTTI…PGQIQDLGDL (126 aa).

The protein belongs to the G-protein coupled receptor 1 family.

Its subcellular location is the cell membrane. In terms of biological role, receptor for dopamine. This is D(5)-like dopamine receptor (dl) from Takifugu rubripes (Japanese pufferfish).